The primary structure comprises 320 residues: Glutaminase (320 aa).

Substrate-binding residues include S70, N121, E165, N172, Y196, Y248, and V266.

The protein belongs to the glutaminase family. As to quaternary structure, homotetramer.

The catalysed reaction is L-glutamine + H2O = L-glutamate + NH4(+). This Mycobacterium marinum (strain ATCC BAA-535 / M) protein is Glutaminase.